The chain runs to 191 residues: Xanthine phosphoribosyltransferase (191 aa).

Leu20 and Asn27 together coordinate xanthine. Ala128 to Ala132 lines the 5-phospho-alpha-D-ribose 1-diphosphate pocket. Lys156 lines the xanthine pocket.

It belongs to the purine/pyrimidine phosphoribosyltransferase family. Xpt subfamily. Homodimer.

Its subcellular location is the cytoplasm. It carries out the reaction XMP + diphosphate = xanthine + 5-phospho-alpha-D-ribose 1-diphosphate. The protein operates within purine metabolism; XMP biosynthesis via salvage pathway; XMP from xanthine: step 1/1. Functionally, converts the preformed base xanthine, a product of nucleic acid breakdown, to xanthosine 5'-monophosphate (XMP), so it can be reused for RNA or DNA synthesis. This chain is Xanthine phosphoribosyltransferase, found in Acinetobacter baumannii (strain AB307-0294).